The chain runs to 314 residues: 4-hydroxy-3-methylbut-2-enyl diphosphate reductase (314 aa).

Position 12 (C12) interacts with [4Fe-4S] cluster. Positions 41 and 74 each coordinate (2E)-4-hydroxy-3-methylbut-2-enyl diphosphate. H41 and H74 together coordinate dimethylallyl diphosphate. Positions 41 and 74 each coordinate isopentenyl diphosphate. Residue C96 coordinates [4Fe-4S] cluster. A (2E)-4-hydroxy-3-methylbut-2-enyl diphosphate-binding site is contributed by H124. H124 is a binding site for dimethylallyl diphosphate. H124 contributes to the isopentenyl diphosphate binding site. The Proton donor role is filled by E126. T167 contacts (2E)-4-hydroxy-3-methylbut-2-enyl diphosphate. C197 is a [4Fe-4S] cluster binding site. Residues S225, S226, N227, and S269 each coordinate (2E)-4-hydroxy-3-methylbut-2-enyl diphosphate. Dimethylallyl diphosphate-binding residues include S225, S226, N227, and S269. Residues S225, S226, N227, and S269 each contribute to the isopentenyl diphosphate site.

Belongs to the IspH family. It depends on [4Fe-4S] cluster as a cofactor.

It carries out the reaction isopentenyl diphosphate + 2 oxidized [2Fe-2S]-[ferredoxin] + H2O = (2E)-4-hydroxy-3-methylbut-2-enyl diphosphate + 2 reduced [2Fe-2S]-[ferredoxin] + 2 H(+). The catalysed reaction is dimethylallyl diphosphate + 2 oxidized [2Fe-2S]-[ferredoxin] + H2O = (2E)-4-hydroxy-3-methylbut-2-enyl diphosphate + 2 reduced [2Fe-2S]-[ferredoxin] + 2 H(+). It functions in the pathway isoprenoid biosynthesis; dimethylallyl diphosphate biosynthesis; dimethylallyl diphosphate from (2E)-4-hydroxy-3-methylbutenyl diphosphate: step 1/1. Its pathway is isoprenoid biosynthesis; isopentenyl diphosphate biosynthesis via DXP pathway; isopentenyl diphosphate from 1-deoxy-D-xylulose 5-phosphate: step 6/6. Catalyzes the conversion of 1-hydroxy-2-methyl-2-(E)-butenyl 4-diphosphate (HMBPP) into a mixture of isopentenyl diphosphate (IPP) and dimethylallyl diphosphate (DMAPP). Acts in the terminal step of the DOXP/MEP pathway for isoprenoid precursor biosynthesis. The polypeptide is 4-hydroxy-3-methylbut-2-enyl diphosphate reductase (Haemophilus influenzae (strain ATCC 51907 / DSM 11121 / KW20 / Rd)).